The following is a 215-amino-acid chain: Pyridoxine/pyridoxamine 5'-phosphate oxidase (215 aa).

Substrate contacts are provided by residues 9–12 (RRDY) and Lys69. FMN-binding positions include 64-69 (RVLLLK), 79-80 (FT), Lys86, and Gln108. Substrate contacts are provided by Tyr126, Arg130, and Ser134. FMN contacts are provided by residues 143 to 144 (QS) and Trp188. Residue 194–196 (RLH) coordinates substrate. Position 198 (Arg198) interacts with FMN.

Belongs to the pyridoxamine 5'-phosphate oxidase family. As to quaternary structure, homodimer. The cofactor is FMN.

It carries out the reaction pyridoxamine 5'-phosphate + O2 + H2O = pyridoxal 5'-phosphate + H2O2 + NH4(+). The enzyme catalyses pyridoxine 5'-phosphate + O2 = pyridoxal 5'-phosphate + H2O2. Its pathway is cofactor metabolism; pyridoxal 5'-phosphate salvage; pyridoxal 5'-phosphate from pyridoxamine 5'-phosphate: step 1/1. The protein operates within cofactor metabolism; pyridoxal 5'-phosphate salvage; pyridoxal 5'-phosphate from pyridoxine 5'-phosphate: step 1/1. Its function is as follows. Catalyzes the oxidation of either pyridoxine 5'-phosphate (PNP) or pyridoxamine 5'-phosphate (PMP) into pyridoxal 5'-phosphate (PLP). The chain is Pyridoxine/pyridoxamine 5'-phosphate oxidase from Pseudomonas syringae pv. tomato (strain ATCC BAA-871 / DC3000).